The following is a 784-amino-acid chain: E3 ubiquitin-protein ligase RNF43 (784 aa).

Residues 1–23 form the signal peptide; it reads MSGGHQLQLAVLWPWLLMATLHA. The Extracellular portion of the chain corresponds to 24–197; the sequence is GFGHTGRVLA…LKEPPAGANY (174 aa). N-linked (GlcNAc...) asparagine glycosylation is found at Asn62 and Asn92. Residues Cys91 and Cys119 are joined by a disulfide bond. A helical transmembrane segment spans residues 198 to 218; the sequence is DVWILLTVVGTVFVIILASVL. Over 219-784 the chain is Cytoplasmic; sequence RIRCRPHHSR…ELEELCEQAV (566 aa). An RING-type; atypical zinc finger spans residues 272–313; it reads CAICLEEFSEGQELRVISCLHEFHRTCVDPWLYQHRTCPLCM. 3 disordered regions span residues 364–407, 459–478, and 516–671; these read TSVA…HLAV, ADGP…SSDS, and DLQG…SLPP. Over residues 386-395 the composition is skewed to basic residues; it reads RHQRLPRTSH. Over residues 464-478 the composition is skewed to low complexity; it reads SDSSSGPCHGSSSDS. Positions 548–568 are enriched in basic residues; the sequence is IHYHRHRHHHYKRQFQWHGRK. The span at 583 to 608 shows a compositional bias: polar residues; it reads SHTQLEPSLPDQQLITPNPTASSMLP. Positions 618 to 629 are enriched in low complexity; that stretch reads EPAPGLAEASSP.

The protein belongs to the ZNRF3 family. Interacts with AKAP8L, NONO and SFPQ. Interacts with FZD5. Identified in a complex composed of RNF43, LGR5 and RSPO1. Interacts with RSPO2. Interacts with LMBR1L. In terms of processing, autoubiquitinated. In terms of tissue distribution, expressed in crypt base columnar cells of small intestinal epithelium. Crypt base columnar cells are small cycling cells residing between the terminally differentiated Paneth cells at crypt bottoms. Colocalizes with Lgr5-positive stem cells.

The protein localises to the cell membrane. Its subcellular location is the endoplasmic reticulum membrane. It is found in the nucleus envelope. The catalysed reaction is S-ubiquitinyl-[E2 ubiquitin-conjugating enzyme]-L-cysteine + [acceptor protein]-L-lysine = [E2 ubiquitin-conjugating enzyme]-L-cysteine + N(6)-ubiquitinyl-[acceptor protein]-L-lysine.. Its pathway is protein modification; protein ubiquitination. In terms of biological role, E3 ubiquitin-protein ligase that acts as a negative regulator of the Wnt signaling pathway by mediating the ubiquitination, endocytosis and subsequent degradation of Wnt receptor complex components Frizzled. Acts on both canonical and non-canonical Wnt signaling pathway. Along with RSPO2 and ZNRF3, constitutes a master switch that governs limb specification. The polypeptide is E3 ubiquitin-protein ligase RNF43 (Rnf43) (Mus musculus (Mouse)).